The following is a 205-amino-acid chain: Regulator of G-protein signaling 4 (205 aa).

Residues C2, C12, and C95 are each lipidated (S-palmitoyl cysteine). In terms of domain architecture, RGS spans 62–178; it reads SLENLISHEC…LKSRFYLDLV (117 aa).

Palmitoylated on Cys-2 and/or Cys-12. In terms of processing, phosphorylated by cyclic GMP-dependent protein kinase.

Its function is as follows. Inhibits signal transduction by increasing the GTPase activity of G protein alpha subunits thereby driving them into their inactive GDP-bound form. Activity on G(z)-alpha is inhibited by phosphorylation of the G-protein. Activity on G(z)-alpha and G(i)-alpha-1 is inhibited by palmitoylation of the G-protein. This is Regulator of G-protein signaling 4 (RGS4) from Bos taurus (Bovine).